The following is a 119-amino-acid chain: Ribosome-binding factor A (119 aa).

This sequence belongs to the RbfA family. In terms of assembly, monomer. Binds 30S ribosomal subunits, but not 50S ribosomal subunits or 70S ribosomes.

The protein resides in the cytoplasm. Functionally, one of several proteins that assist in the late maturation steps of the functional core of the 30S ribosomal subunit. Associates with free 30S ribosomal subunits (but not with 30S subunits that are part of 70S ribosomes or polysomes). Required for efficient processing of 16S rRNA. May interact with the 5'-terminal helix region of 16S rRNA. The sequence is that of Ribosome-binding factor A from Ligilactobacillus salivarius (strain UCC118) (Lactobacillus salivarius).